We begin with the raw amino-acid sequence, 428 residues long: Trigger factor (428 aa).

Residues 163–248 (GDMVVIDYKG…VHEIKEKELP (86 aa)) form the PPIase FKBP-type domain.

It belongs to the FKBP-type PPIase family. Tig subfamily.

It localises to the cytoplasm. The enzyme catalyses [protein]-peptidylproline (omega=180) = [protein]-peptidylproline (omega=0). Involved in protein export. Acts as a chaperone by maintaining the newly synthesized protein in an open conformation. Functions as a peptidyl-prolyl cis-trans isomerase. The chain is Trigger factor from Alkaliphilus metalliredigens (strain QYMF).